The chain runs to 246 residues: Probable transcriptional regulatory protein Teth39_1009 (246 aa).

The disordered stretch occupies residues Met1–Lys21.

This sequence belongs to the TACO1 family.

It is found in the cytoplasm. The polypeptide is Probable transcriptional regulatory protein Teth39_1009 (Thermoanaerobacter pseudethanolicus (strain ATCC 33223 / 39E) (Clostridium thermohydrosulfuricum)).